A 164-amino-acid chain; its full sequence is SsrA-binding protein (164 aa).

This sequence belongs to the SmpB family.

The protein resides in the cytoplasm. Required for rescue of stalled ribosomes mediated by trans-translation. Binds to transfer-messenger RNA (tmRNA), required for stable association of tmRNA with ribosomes. tmRNA and SmpB together mimic tRNA shape, replacing the anticodon stem-loop with SmpB. tmRNA is encoded by the ssrA gene; the 2 termini fold to resemble tRNA(Ala) and it encodes a 'tag peptide', a short internal open reading frame. During trans-translation Ala-aminoacylated tmRNA acts like a tRNA, entering the A-site of stalled ribosomes, displacing the stalled mRNA. The ribosome then switches to translate the ORF on the tmRNA; the nascent peptide is terminated with the 'tag peptide' encoded by the tmRNA and targeted for degradation. The ribosome is freed to recommence translation, which seems to be the essential function of trans-translation. This Shewanella woodyi (strain ATCC 51908 / MS32) protein is SsrA-binding protein.